Reading from the N-terminus, the 76-residue chain is uncharacterized protein (76 aa).

This is an uncharacterized protein from Acidianus bottle-shaped virus (isolate Italy/Pozzuoli) (ABV).